The primary structure comprises 720 residues: Inactive serine protease PAMR1 (720 aa).

A signal peptide spans 1-21 (MELGCWTQLGLTFLQLLLISS). Cystine bridges form between Cys128/Cys150, Cys177/Cys199, Cys239/Cys250, Cys244/Cys260, Cys262/Cys271, Cys280/Cys329, Cys315/Cys342, and Cys414/Cys442. The CUB domain occupies 128–236 (CGQVLRAPKG…DGFHAIFEEI (109 aa)). The 38-residue stretch at 235 to 272 (EITACSSSPCFHDGTCVLDKAGSYKCACLAGYTGQRCE) folds into the EGF-like domain. 2 consecutive Sushi domains span residues 278-344 (RNCS…ICIK) and 387-444 (APTK…SCIP). One can recognise a Peptidase S1 domain in the interval 445–720 (ICGKIENVTA…FKDWIERNMK (276 aa)). Asn451 carries an N-linked (GlcNAc...) asparagine glycan. An intrachain disulfide couples Cys489 to Cys505. Asn614 is a glycosylation site (N-linked (GlcNAc...) asparagine). 2 disulfide bridges follow: Cys630-Cys649 and Cys661-Cys697.

It belongs to the peptidase S1 family.

It is found in the secreted. Functionally, may play a role in regeneration of skeletal muscle. The sequence is that of Inactive serine protease PAMR1 (PAMR1) from Pongo abelii (Sumatran orangutan).